We begin with the raw amino-acid sequence, 207 residues long: Small ribosomal subunit protein uS4 (207 aa).

Residues 30–54 form a disordered region; that stretch reads DKCKLDSKPGQHGRTSGARTSDYGN. A compositionally biased stretch (polar residues) spans 42–53; the sequence is GRTSGARTSDYG. The S4 RNA-binding domain occupies 97 to 160; it reads SRLDNVVYRM…KKQVRIAEAL (64 aa).

The protein belongs to the universal ribosomal protein uS4 family. As to quaternary structure, part of the 30S ribosomal subunit. Contacts protein S5. The interaction surface between S4 and S5 is involved in control of translational fidelity.

One of the primary rRNA binding proteins, it binds directly to 16S rRNA where it nucleates assembly of the body of the 30S subunit. Functionally, with S5 and S12 plays an important role in translational accuracy. The chain is Small ribosomal subunit protein uS4 from Cupriavidus taiwanensis (strain DSM 17343 / BCRC 17206 / CCUG 44338 / CIP 107171 / LMG 19424 / R1) (Ralstonia taiwanensis (strain LMG 19424)).